The sequence spans 341 residues: UDP-3-O-acylglucosamine N-acyltransferase (341 aa).

The Proton acceptor role is filled by His-241.

It belongs to the transferase hexapeptide repeat family. LpxD subfamily. As to quaternary structure, homotrimer.

The enzyme catalyses a UDP-3-O-[(3R)-3-hydroxyacyl]-alpha-D-glucosamine + a (3R)-hydroxyacyl-[ACP] = a UDP-2-N,3-O-bis[(3R)-3-hydroxyacyl]-alpha-D-glucosamine + holo-[ACP] + H(+). Its pathway is bacterial outer membrane biogenesis; LPS lipid A biosynthesis. Catalyzes the N-acylation of UDP-3-O-acylglucosamine using 3-hydroxyacyl-ACP as the acyl donor. Is involved in the biosynthesis of lipid A, a phosphorylated glycolipid that anchors the lipopolysaccharide to the outer membrane of the cell. This Haemophilus ducreyi (strain 35000HP / ATCC 700724) protein is UDP-3-O-acylglucosamine N-acyltransferase.